We begin with the raw amino-acid sequence, 134 residues long: Iron-sulfur cluster insertion protein ErpA (134 aa).

Residues Cys-47, Cys-126, and Cys-128 each contribute to the iron-sulfur cluster site.

It belongs to the HesB/IscA family. Homodimer. Iron-sulfur cluster serves as cofactor.

Its function is as follows. Required for insertion of 4Fe-4S clusters for at least IspG. The polypeptide is Iron-sulfur cluster insertion protein ErpA (Coxiella burnetii (strain RSA 331 / Henzerling II)).